A 417-amino-acid chain; its full sequence is Dibenzothiophene monooxygenase (417 aa).

A helical N-terminus region spans residues 19-125 (DPVAVARGLA…LYTQIAQNNW (107 aa)). FMN-binding positions include Tyr96, 129-134 (NASSEN), 159-163 (KHFCS), Arg282, 369-370 (AR), and His391. The interval 126 to 234 (WTGNASSENN…VEPDEVLGAP (109 aa)) is central beta-barrel N-terminus. Positions 131–142 (SSENNSHELDVK) are lid loop. The segment at 235–409 (NAFVLAFIQS…DVGKHTLNGQ (175 aa)) is helical C-terminus.

Belongs to the DszC flavin monooxygenase family. Homotetramer.

The protein resides in the cytoplasm. It catalyses the reaction dibenzothiophene + 2 FMNH2 + 2 O2 = dibenzothiophene 5,5-dioxide + 2 FMN + 2 H2O + 2 H(+). The catalysed reaction is dibenzothiophene + FMNH2 + O2 = dibenzothiophene 5-oxide + FMN + H2O + H(+). It carries out the reaction dibenzothiophene 5-oxide + FMNH2 + O2 = dibenzothiophene 5,5-dioxide + FMN + H2O + H(+). The protein operates within sulfur metabolism; dibenzothiophene degradation. Catalyzes the first step of the '4S' desulfurization pathway that removes covalently bound sulfur from dibenzothiophene (DBT) without breaking carbon-carbon bonds. Sulfur dioxygenase which converts DBT to DBT-sulfone (DBTO2 or DBT 5,5-dioxide) in a stepwise manner. In Rhodococcus erythropolis (Arthrobacter picolinophilus), this protein is Dibenzothiophene monooxygenase.